Here is a 152-residue protein sequence, read N- to C-terminus: UPF0266 membrane protein YobD (152 aa).

At Met1–Asp5 the chain is on the periplasmic side. A helical transmembrane segment spans residues Leu6–Met26. Over Pro27–Arg44 the chain is Cytoplasmic. A helical transmembrane segment spans residues Ile45 to His65. Gly66 is a topological domain (periplasmic). Residues Ala67–Ile87 traverse the membrane as a helical segment. Residues Arg88–Gln152 are Cytoplasmic-facing.

It belongs to the UPF0266 family.

It is found in the cell inner membrane. The protein is UPF0266 membrane protein YobD (yobD) of Salmonella typhi.